Here is an 876-residue protein sequence, read N- to C-terminus: Leucine--tRNA ligase (876 aa).

The short motif at 43–53 is the 'HIGH' region element; the sequence is PYPSGRIHIGH. The short motif at 632–636 is the 'KMSKS' region element; that stretch reads KMSKS. K635 lines the ATP pocket.

The protein belongs to the class-I aminoacyl-tRNA synthetase family.

It is found in the cytoplasm. The catalysed reaction is tRNA(Leu) + L-leucine + ATP = L-leucyl-tRNA(Leu) + AMP + diphosphate. The chain is Leucine--tRNA ligase from Allorhizobium ampelinum (strain ATCC BAA-846 / DSM 112012 / S4) (Agrobacterium vitis (strain S4)).